The sequence spans 225 residues: Claudin-17 (225 aa).

Topologically, residues 1 to 7 are cytoplasmic; sequence MAFYPLQ. A helical transmembrane segment spans residues 8–28; sequence IAGLVLGFLGMVGTLATTLLP. At 29–81 the chain is on the extracellular side; sequence QWRVSAFIGSNIIVFERIWEGLWMNCVRQAKARLQCKFYSSMLALSPALEAAR. Residues 82–102 traverse the membrane as a helical segment; the sequence is ALMCVAVALSLIALIIGICGM. Topologically, residues 103-124 are cytoplasmic; it reads KKIQCTGSNERAKAYLLGTSGV. Residues 125–145 traverse the membrane as a helical segment; it reads LFILTGIFVLIPVCWTANIII. The Extracellular portion of the chain corresponds to 146–164; sequence RDFYNPAVHVGQKRELGAA. A helical transmembrane segment spans residues 165–185; sequence LFLGWASVAVLFIAGGLLCGF. Residues 186-225 lie on the Cytoplasmic side of the membrane; it reads CCCNRKKQRDGYPAPRPSMPRTDERRRNMTRQSETPTSYV. A disordered region spans residues 194–225; sequence RDGYPAPRPSMPRTDERRRNMTRQSETPTSYV. Residues 215 to 225 show a composition bias toward polar residues; it reads TRQSETPTSYV.

It belongs to the claudin family. In terms of assembly, does not form homotypic polymeric strands and it is not sufficient to form tight junctions by its own. Interacts with OCLN.

It localises to the cell junction. It is found in the tight junction. The protein resides in the cell membrane. It carries out the reaction chloride(in) = chloride(out). The enzyme catalyses hydrogencarbonate(in) = hydrogencarbonate(out). The catalysed reaction is bromide(in) = bromide(out). It catalyses the reaction iodide(out) = iodide(in). It carries out the reaction fluoride(in) = fluoride(out). The enzyme catalyses nitrate(in) = nitrate(out). The catalysed reaction is thiocyanate(in) = thiocyanate(out). Its function is as follows. Channel-forming tight junction protein with selectivity for anions, including chloride and hydrogencarbonate, and for solutes smaller than 9 Angstrom in diameter. In the kidney proximal tubule, may be involved in quantitative reabsorption of filtered anions. Does not affect water permeability. The polypeptide is Claudin-17 (CLDN17) (Sus scrofa (Pig)).